Here is a 732-residue protein sequence, read N- to C-terminus: 1,4-alpha-glucan branching enzyme GlgB 1 (732 aa).

Catalysis depends on Asp-411, which acts as the Nucleophile. Glu-464 (proton donor) is an active-site residue.

The protein belongs to the glycosyl hydrolase 13 family. GlgB subfamily. In terms of assembly, monomer.

The catalysed reaction is Transfers a segment of a (1-&gt;4)-alpha-D-glucan chain to a primary hydroxy group in a similar glucan chain.. Its pathway is glycan biosynthesis; glycogen biosynthesis. Catalyzes the formation of the alpha-1,6-glucosidic linkages in glycogen by scission of a 1,4-alpha-linked oligosaccharide from growing alpha-1,4-glucan chains and the subsequent attachment of the oligosaccharide to the alpha-1,6 position. The sequence is that of 1,4-alpha-glucan branching enzyme GlgB 1 from Xanthomonas euvesicatoria pv. vesicatoria (strain 85-10) (Xanthomonas campestris pv. vesicatoria).